Here is a 375-residue protein sequence, read N- to C-terminus: Putative glutamate--cysteine ligase 2 (375 aa).

It belongs to the glutamate--cysteine ligase type 2 family. YbdK subfamily.

The enzyme catalyses L-cysteine + L-glutamate + ATP = gamma-L-glutamyl-L-cysteine + ADP + phosphate + H(+). ATP-dependent carboxylate-amine ligase which exhibits weak glutamate--cysteine ligase activity. The polypeptide is Putative glutamate--cysteine ligase 2 (Sorangium cellulosum (strain So ce56) (Polyangium cellulosum (strain So ce56))).